The chain runs to 181 residues: Inorganic pyrophosphatase (181 aa).

The substrate site is built by Lys-16, Arg-30, and Tyr-42. Asp-52, Asp-57, and Asp-89 together coordinate Mg(2+). Residue Tyr-126 coordinates substrate.

It belongs to the PPase family. In terms of assembly, homohexamer. The cofactor is Mg(2+).

The protein localises to the cytoplasm. It catalyses the reaction diphosphate + H2O = 2 phosphate + H(+). Its function is as follows. Catalyzes the hydrolysis of inorganic pyrophosphate (PPi) forming two phosphate ions. In Malacoplasma penetrans (strain HF-2) (Mycoplasma penetrans), this protein is Inorganic pyrophosphatase.